The following is a 109-amino-acid chain: Large ribosomal subunit protein uL24 (109 aa).

The protein belongs to the universal ribosomal protein uL24 family. In terms of assembly, part of the 50S ribosomal subunit.

One of two assembly initiator proteins, it binds directly to the 5'-end of the 23S rRNA, where it nucleates assembly of the 50S subunit. Its function is as follows. One of the proteins that surrounds the polypeptide exit tunnel on the outside of the subunit. The chain is Large ribosomal subunit protein uL24 from Desulforapulum autotrophicum (strain ATCC 43914 / DSM 3382 / VKM B-1955 / HRM2) (Desulfobacterium autotrophicum).